The following is a 191-amino-acid chain: GTP-dependent dephospho-CoA kinase (191 aa).

Residues aspartate 46, aspartate 65, lysine 67, and glutamate 122 each contribute to the GTP site.

Belongs to the GTP-dependent DPCK family.

It catalyses the reaction 3'-dephospho-CoA + GTP = GDP + CoA + H(+). It participates in cofactor biosynthesis; coenzyme A biosynthesis. Catalyzes the GTP-dependent phosphorylation of the 3'-hydroxyl group of dephosphocoenzyme A to form coenzyme A (CoA). In Methanopyrus kandleri (strain AV19 / DSM 6324 / JCM 9639 / NBRC 100938), this protein is GTP-dependent dephospho-CoA kinase.